The chain runs to 25 residues: Inorganic pyrophosphatase (25 aa).

In terms of assembly, monomer. Mg(2+) is required as a cofactor.

The enzyme catalyses diphosphate + H2O = 2 phosphate + H(+). This chain is Inorganic pyrophosphatase, found in Cyanophora paradoxa.